A 270-amino-acid chain; its full sequence is Transcriptional regulator BrlR (270 aa).

Residue methionine 1 participates in 3',3'-c-di-GMP binding. An HTH merR-type domain is found at 1 to 71 (MLTIGQLARI…LEAIDRLKRD (71 aa)). A DNA-binding region (H-T-H motif) is located at residues 4-23 (IGQLARIFEISTKTLRHYDA). Positions 31, 34, 35, 40, 67, 70, 86, and 270 each coordinate 3',3'-c-di-GMP. The interval 120 to 270 (MHARIVERPA…SQVDLYIPIY (151 aa)) is involved in effector-binding, probably including pyocyanine-binding.

Monomer. Homodimer; dimer formation enhanced in the presence of the second messenger, cyclic di-GMP (c-di-GMP). Homotetramer; dimer of dimers, arranged in a head-to-tail fashion, which may reduce DNA-binding ability. Conformational changes upon binding c-di-GMP or pyocyanine may facilitate DNA binding.

In terms of biological role, transcriptional regulator. Responsive to the second messenger cyclic di-GMP (c-di-GMP) and to the virulence factor pyocyanine, which both enhance gene expression and promoter DNA binding of BrlR. Activates expression of operons encoding the multidrug efflux pumps MexAB-OprM and MexEF-OprN and several ABC transport systems, acting by direct binding to their respective promoters. Also acts as a repressor of the two component regulatory system, PhoPQ. Binds to promoter of its own gene. Contributes to the antimicrobial tolerance exhibited by biofilms, acting, at least in part, by activating expression of multidrug efflux pumps and ABC transporters. This chain is Transcriptional regulator BrlR, found in Pseudomonas aeruginosa (strain ATCC 15692 / DSM 22644 / CIP 104116 / JCM 14847 / LMG 12228 / 1C / PRS 101 / PAO1).